Reading from the N-terminus, the 367-residue chain is Phosphoribosylaminoimidazole-succinocarboxamide synthase (367 aa).

This sequence belongs to the SAICAR synthetase family.

It carries out the reaction 5-amino-1-(5-phospho-D-ribosyl)imidazole-4-carboxylate + L-aspartate + ATP = (2S)-2-[5-amino-1-(5-phospho-beta-D-ribosyl)imidazole-4-carboxamido]succinate + ADP + phosphate + 2 H(+). It functions in the pathway purine metabolism; IMP biosynthesis via de novo pathway; 5-amino-1-(5-phospho-D-ribosyl)imidazole-4-carboxamide from 5-amino-1-(5-phospho-D-ribosyl)imidazole-4-carboxylate: step 1/2. In Shewanella baltica (strain OS155 / ATCC BAA-1091), this protein is Phosphoribosylaminoimidazole-succinocarboxamide synthase.